The following is a 195-amino-acid chain: Imidazoleglycerol-phosphate dehydratase (195 aa).

This sequence belongs to the imidazoleglycerol-phosphate dehydratase family.

The protein localises to the cytoplasm. It catalyses the reaction D-erythro-1-(imidazol-4-yl)glycerol 3-phosphate = 3-(imidazol-4-yl)-2-oxopropyl phosphate + H2O. It participates in amino-acid biosynthesis; L-histidine biosynthesis; L-histidine from 5-phospho-alpha-D-ribose 1-diphosphate: step 6/9. The chain is Imidazoleglycerol-phosphate dehydratase from Burkholderia ambifaria (strain MC40-6).